A 351-amino-acid polypeptide reads, in one-letter code: Photosystem II D2 protein (351 aa).

A helical transmembrane segment spans residues 39–59; it reads CSYLALGAWFTGTTFVTSWYT. His116 lines the chlorophyll a pocket. Residues 123-139 form a helical membrane-spanning segment; sequence GFCLRQFEIARLVGLRP. Residues Gln128 and Asn141 each contribute to the pheophytin a site. The chain crosses the membrane as a helical span at residues 151 to 164; it reads VFVSVFLLYPLGQA. A chlorophyll a-binding site is contributed by His196. Residues 206–226 traverse the membrane as a helical segment; sequence GALLCAIHGATVQNTLFEDGE. His213 and Phe260 together coordinate a plastoquinone. Fe cation is bound at residue His213. Residue His267 participates in Fe cation binding. A helical transmembrane segment spans residues 277–293; it reads GLWASSIGIVGLALNLR.

This sequence belongs to the reaction center PufL/M/PsbA/D family. In terms of assembly, PSII is composed of 1 copy each of membrane proteins PsbA, PsbB, PsbC, PsbD, PsbE, PsbF, PsbH, PsbI, PsbJ, PsbK, PsbL, PsbM, PsbT, PsbX, PsbY, PsbZ, Psb30/Ycf12, at least 3 peripheral proteins of the oxygen-evolving complex and a large number of cofactors. It forms dimeric complexes. The cofactor is The D1/D2 heterodimer binds P680, chlorophylls that are the primary electron donor of PSII, and subsequent electron acceptors. It shares a non-heme iron and each subunit binds pheophytin, quinone, additional chlorophylls, carotenoids and lipids. There is also a Cl(-1) ion associated with D1 and D2, which is required for oxygen evolution. The PSII complex binds additional chlorophylls, carotenoids and specific lipids..

Its subcellular location is the plastid. The protein resides in the chloroplast thylakoid membrane. The enzyme catalyses 2 a plastoquinone + 4 hnu + 2 H2O = 2 a plastoquinol + O2. In terms of biological role, photosystem II (PSII) is a light-driven water:plastoquinone oxidoreductase that uses light energy to abstract electrons from H(2)O, generating O(2) and a proton gradient subsequently used for ATP formation. It consists of a core antenna complex that captures photons, and an electron transfer chain that converts photonic excitation into a charge separation. The D1/D2 (PsbA/PsbD) reaction center heterodimer binds P680, the primary electron donor of PSII as well as several subsequent electron acceptors. D2 is needed for assembly of a stable PSII complex. The chain is Photosystem II D2 protein from Cyanidioschyzon merolae (strain NIES-3377 / 10D) (Unicellular red alga).